Here is a 291-residue protein sequence, read N- to C-terminus: tRNA U34 carboxymethyltransferase (291 aa).

Residues lysine 61, tryptophan 75, lysine 80, glycine 100, 122-124, 149-150, tyrosine 169, and arginine 284 each bind carboxy-S-adenosyl-L-methionine; these read DPS and VE.

This sequence belongs to the class I-like SAM-binding methyltransferase superfamily. CmoB family. In terms of assembly, homotetramer.

The catalysed reaction is carboxy-S-adenosyl-L-methionine + 5-hydroxyuridine(34) in tRNA = 5-carboxymethoxyuridine(34) in tRNA + S-adenosyl-L-homocysteine + H(+). Functionally, catalyzes carboxymethyl transfer from carboxy-S-adenosyl-L-methionine (Cx-SAM) to 5-hydroxyuridine (ho5U) to form 5-carboxymethoxyuridine (cmo5U) at position 34 in tRNAs. The protein is tRNA U34 carboxymethyltransferase of Campylobacter jejuni subsp. jejuni serotype O:2 (strain ATCC 700819 / NCTC 11168).